Consider the following 385-residue polypeptide: tRNA pseudouridine synthase D (385 aa).

Catalysis depends on D65, which acts as the Nucleophile. A TRUD domain is found at 143 to 345 (GCENYFGEQR…SDGVRKAFFK (203 aa)).

The protein belongs to the pseudouridine synthase TruD family.

The catalysed reaction is uridine(13) in tRNA = pseudouridine(13) in tRNA. Responsible for synthesis of pseudouridine from uracil-13 in transfer RNAs. The sequence is that of tRNA pseudouridine synthase D from Aquifex aeolicus (strain VF5).